The primary structure comprises 102 residues: Large ribosomal subunit protein uL24 (102 aa).

Belongs to the universal ribosomal protein uL24 family. Part of the 50S ribosomal subunit.

Its function is as follows. One of two assembly initiator proteins, it binds directly to the 5'-end of the 23S rRNA, where it nucleates assembly of the 50S subunit. Functionally, one of the proteins that surrounds the polypeptide exit tunnel on the outside of the subunit. The protein is Large ribosomal subunit protein uL24 of Limosilactobacillus reuteri (strain DSM 20016) (Lactobacillus reuteri).